We begin with the raw amino-acid sequence, 54 residues long: uncharacterized protein (54 aa).

The first 21 residues, 1-21, serve as a signal peptide directing secretion; that stretch reads MNSKQILSLSAFAMTIATAAA. Residues 22–29 are Extracellular-facing; it reads GNWNAGDT. Residues 30 to 50 form a helical membrane-spanning segment; it reads IALLIGIAMFFVLLLALLGWI. Residues 51–54 lie on the Cytoplasmic side of the membrane; the sequence is SRKK.

The protein localises to the membrane. This is an uncharacterized protein from Dictyostelium discoideum (Social amoeba).